We begin with the raw amino-acid sequence, 165 residues long: MAENFSFDVVSDFDRQELVNALDQVKREISQRYDLKGTDTSLDLEKDNIFITTNSELTLNSVIDIIRQKAIKRKLSIKIFDFNSIEVVSGNKVKQTITLKKGLNQEIAKKISKNIRDEIKKINVSINGETLRVMSKSKNDLQLAIKLLENLEETYKIPLQTNNYR.

The protein belongs to the YajQ family.

Nucleotide-binding protein. The polypeptide is Nucleotide-binding protein PMM0481 (Prochlorococcus marinus subsp. pastoris (strain CCMP1986 / NIES-2087 / MED4)).